A 68-amino-acid chain; its full sequence is Non-specific lipid-transfer protein 2 (68 aa).

It belongs to the plant LTP family.

Plant non-specific lipid-transfer proteins transfer phospholipids as well as galactolipids across membranes. May play a role in wax or cutin deposition in the cell walls of expanding epidermal cells and certain secretory tissues. The chain is Non-specific lipid-transfer protein 2 from Prunus armeniaca (Apricot).